A 581-amino-acid polypeptide reads, in one-letter code: Probable hexosyltransferase MUCI70 (581 aa).

The Cytoplasmic portion of the chain corresponds to 1-58 (MTGLGVRSSSYGSLEKTGLNGVVLPIQITTTTRTKPSKMQKDREGIVHWICKFAGRKK). The helical; Signal-anchor for type II membrane protein transmembrane segment at 59–79 (VGMLLLFLISAVVFLRVLYVG) threads the bilayer. Over 80–581 (KGEDSQEGQG…NLPVRLPDSA (502 aa)) the chain is Lumenal. 9 N-linked (GlcNAc...) asparagine glycosylation sites follow: Asn-96, Asn-102, Asn-119, Asn-194, Asn-224, Asn-285, Asn-382, Asn-411, and Asn-488. The interval 514–581 (RFARQRPPVP…NLPVRLPDSA (68 aa)) is disordered. Residues 520 to 536 (PPVPNFPPPPPSPPPPV) are compositionally biased toward pro residues. Residues 553-571 (PPRRRGRDRRSGQRGHRKA) are compositionally biased toward basic residues.

It belongs to the glycosyltransferase 8 family. In terms of tissue distribution, expressed in siliques and seeds.

It is found in the golgi apparatus membrane. It participates in glycan metabolism; pectin biosynthesis. Probable glycosyltransferase involved in pectin and/or xylans biosynthesis in cell walls. Together with IRX14, required for xylan and pectin synthesis in seed coat epidermal (SCE) cells. Collaboratively with GAUT11, essential for the accumulation of seed mucilage, a gelatinous wall rich in unbranched rhamnogalacturonan I (RG I), and for shaping the surface morphology of seeds. The sequence is that of Probable hexosyltransferase MUCI70 from Arabidopsis thaliana (Mouse-ear cress).